The following is a 54-amino-acid chain: H-bracotoxin-Cf4 (54 aa).

The N-terminal stretch at 1–21 is a signal peptide; it reads MSKLFIFFLLVALLAFVSSEA. 3 disulfide bridges follow: cysteine 24–cysteine 39, cysteine 31–cysteine 43, and cysteine 38–cysteine 53.

Expressed by the venom duct.

It is found in the secreted. In terms of biological role, this endoparasitoid wasp peptide has a role in disruption of the cellular host immune response, since it reduces the capacity of D.saccharalis hemocytes to encapsulate foreign bodies. On the other hand, it shows no effect on the humoral immune response, since it has no effect on phenoloxidase activity. The polypeptide is H-bracotoxin-Cf4 (Cotesia flavipes (Parasitic wasp)).